A 149-amino-acid chain; its full sequence is Ribonuclease pancreatic (149 aa).

A signal peptide spans 1–25; the sequence is MGLEKSLILLPLLVLVLAWVQPSLG. Lys32 and Arg35 together coordinate substrate. The active-site Proton acceptor is His37. Disulfide bonds link Cys51-Cys109, Cys65-Cys120, Cys83-Cys135, and Cys90-Cys97. 66–70 is a binding site for substrate; that stretch reads KRVNT. Residue Asn87 is glycosylated (N-linked (GlcNAc...) asparagine). Substrate-binding residues include Lys91 and Arg110. The Proton donor role is filled by His144.

The protein belongs to the pancreatic ribonuclease family. Monomer. Interacts with and forms tight 1:1 complexes with RNH1. Dimerization of two such complexes may occur. Interaction with RNH1 inhibits this protein. Pancreas.

The protein localises to the secreted. It carries out the reaction an [RNA] containing cytidine + H2O = an [RNA]-3'-cytidine-3'-phosphate + a 5'-hydroxy-ribonucleotide-3'-[RNA].. The catalysed reaction is an [RNA] containing uridine + H2O = an [RNA]-3'-uridine-3'-phosphate + a 5'-hydroxy-ribonucleotide-3'-[RNA].. In terms of biological role, endonuclease that catalyzes the cleavage of RNA on the 3' side of pyrimidine nucleotides. Acts on single-stranded and double-stranded RNA. The chain is Ribonuclease pancreatic (RNASE1) from Acomys cahirinus (Cairo spiny mouse).